The primary structure comprises 418 residues: 3-isopropylmalate dehydratase large subunit (418 aa).

[4Fe-4S] cluster is bound by residues cysteine 298, cysteine 358, and cysteine 361.

It belongs to the aconitase/IPM isomerase family. LeuC type 2 subfamily. As to quaternary structure, heterodimer of LeuC and LeuD. [4Fe-4S] cluster is required as a cofactor.

The enzyme catalyses (2R,3S)-3-isopropylmalate = (2S)-2-isopropylmalate. The protein operates within amino-acid biosynthesis; L-leucine biosynthesis; L-leucine from 3-methyl-2-oxobutanoate: step 2/4. Its function is as follows. Catalyzes the isomerization between 2-isopropylmalate and 3-isopropylmalate, via the formation of 2-isopropylmaleate. The polypeptide is 3-isopropylmalate dehydratase large subunit (Thermoanaerobacter sp. (strain X514)).